Reading from the N-terminus, the 339-residue chain is Leucine-rich repeat-containing protein 75A (339 aa).

Residues 1–25 form a disordered region; sequence MGTRQTKGSLAERASPGAAPGPRRE. Residues 11–21 show a composition bias toward low complexity; sequence AERASPGAAPG. LRR repeat units lie at residues 203 to 216 and 228 to 241; these read VDSVELGFTGLTDD and LPRLTTLALNGNRL. The disordered stretch occupies residues 294–339; it reads LPTILELGEGPGTGEEAREGTDQQDPIGSPVTPARGQESTECVIQT. Ser322 is modified (phosphoserine). A Phosphothreonine modification is found at Thr325. Residues 330–339 show a composition bias toward polar residues; that stretch reads QESTECVIQT.

The protein belongs to the LRRC75 family.

This is Leucine-rich repeat-containing protein 75A (Lrrc75a) from Mus musculus (Mouse).